Consider the following 213-residue polypeptide: Na(+)-translocating NADH-quinone reductase subunit D (213 aa).

The next 7 membrane-spanning stretches (helical) occupy residues 14-34 (ALWI…ALAV), 42-62 (LTMG…VSLL), 77-97 (IIIS…FFNI), 101-121 (LSVF…AESM), 131-151 (FLDG…ISII), 154-174 (LFGF…YASA), and 183-203 (LGLM…VWLV).

The protein belongs to the NqrDE/RnfAE family. In terms of assembly, composed of six subunits; NqrA, NqrB, NqrC, NqrD, NqrE and NqrF.

Its subcellular location is the cell inner membrane. The enzyme catalyses a ubiquinone + n Na(+)(in) + NADH + H(+) = a ubiquinol + n Na(+)(out) + NAD(+). Its function is as follows. NQR complex catalyzes the reduction of ubiquinone-1 to ubiquinol by two successive reactions, coupled with the transport of Na(+) ions from the cytoplasm to the periplasm. NqrA to NqrE are probably involved in the second step, the conversion of ubisemiquinone to ubiquinol. In Chlamydia muridarum (strain MoPn / Nigg), this protein is Na(+)-translocating NADH-quinone reductase subunit D.